The chain runs to 810 residues: Phenylalanine--tRNA ligase beta subunit (810 aa).

A tRNA-binding domain is found at 39 to 154 (APPTEKIVVG…EGTPVGQDIR (116 aa)). Positions 405-480 (PQRAPVSMRA…RIYGFEKIPA (76 aa)) constitute a B5 domain. 4 residues coordinate Mg(2+): aspartate 458, aspartate 464, glutamate 467, and glutamate 468. In terms of domain architecture, FDX-ACB spans 707–809 (SKFPPVRRDI…MARVYGARLR (103 aa)).

The protein belongs to the phenylalanyl-tRNA synthetase beta subunit family. Type 1 subfamily. As to quaternary structure, tetramer of two alpha and two beta subunits. It depends on Mg(2+) as a cofactor.

It is found in the cytoplasm. It catalyses the reaction tRNA(Phe) + L-phenylalanine + ATP = L-phenylalanyl-tRNA(Phe) + AMP + diphosphate + H(+). This chain is Phenylalanine--tRNA ligase beta subunit, found in Burkholderia pseudomallei (strain 1710b).